A 139-amino-acid polypeptide reads, in one-letter code: MAASPLVVQKTEEEWRAVLSPEQFRILRQKGTEKPGTGEYDKFFEEGIFDCVGCKTPLYKSTTKFDSGCGWPAFFEGLPGAINRTPDPDGRRTEITCAACDGHLGHVFKGEGYGNPTDERHCVNSVSISFNPAKSSSII.

At Ala-2 the chain carries N-acetylalanine. The MsrB domain occupies 12 to 133 (EEEWRAVLSP…NSVSISFNPA (122 aa)). Zn(2+) is bound by residues Cys-51, Cys-54, Cys-97, and Cys-100. Cys-69 and Cys-122 are joined by a disulfide. Cys-122 serves as the catalytic Nucleophile.

The protein belongs to the MsrB Met sulfoxide reductase family. The cofactor is Zn(2+).

Its subcellular location is the cytoplasm. It is found in the cytosol. The enzyme catalyses L-methionyl-[protein] + [thioredoxin]-disulfide + H2O = L-methionyl-(R)-S-oxide-[protein] + [thioredoxin]-dithiol. In terms of biological role, catalyzes the reduction of methionine sulfoxide (MetSO) to methionine in proteins. Plays a protective role against oxidative stress by restoring activity to proteins that have been inactivated by methionine oxidation. MSRB family specifically reduces the MetSO R-enantiomer. The polypeptide is Peptide methionine sulfoxide reductase B5 (MSRB5) (Arabidopsis thaliana (Mouse-ear cress)).